The chain runs to 257 residues: Imidazole glycerol phosphate synthase subunit HisF (257 aa).

Residues Asp12 and Asp131 contribute to the active site.

It belongs to the HisA/HisF family. In terms of assembly, heterodimer of HisH and HisF.

The protein resides in the cytoplasm. It carries out the reaction 5-[(5-phospho-1-deoxy-D-ribulos-1-ylimino)methylamino]-1-(5-phospho-beta-D-ribosyl)imidazole-4-carboxamide + L-glutamine = D-erythro-1-(imidazol-4-yl)glycerol 3-phosphate + 5-amino-1-(5-phospho-beta-D-ribosyl)imidazole-4-carboxamide + L-glutamate + H(+). Its pathway is amino-acid biosynthesis; L-histidine biosynthesis; L-histidine from 5-phospho-alpha-D-ribose 1-diphosphate: step 5/9. In terms of biological role, IGPS catalyzes the conversion of PRFAR and glutamine to IGP, AICAR and glutamate. The HisF subunit catalyzes the cyclization activity that produces IGP and AICAR from PRFAR using the ammonia provided by the HisH subunit. This Paraburkholderia xenovorans (strain LB400) protein is Imidazole glycerol phosphate synthase subunit HisF.